A 610-amino-acid polypeptide reads, in one-letter code: Chitinase 63 (610 aa).

The signal sequence occupies residues 1-30 (MRFRHKAAALAATLALPLAGLVGLASPAQA). Positions 31-134 (ATSATATFQK…KINGGSCDGS (104 aa)) constitute a CBM2 domain. 2 disordered regions span residues 125-153 (KINGGSCDGSSVPGDEAPSAPGTPTASNI) and 208-239 (ARDTGDQTGPASGSVKVTTTGGDGGEPNPNPG). Positions 144-229 (APGTPTASNI…GSVKVTTTGG (86 aa)) constitute a Fibronectin type-III domain. Residues 213–224 (DQTGPASGSVKV) show a composition bias toward polar residues. In terms of domain architecture, GH18 spans 241-610 (EVKMGYFTNW…LVSAIDSGLK (370 aa)). Residues 313 to 314 (DQ) and 340 to 343 (GGWT) contribute to the chitin site. The Proton donor role is filled by glutamate 383. Chitin contacts are provided by residues tyrosine 384, 450–453 (MTYD), and tryptophan 590.

It belongs to the glycosyl hydrolase 18 family. Chitinase class II subfamily.

The enzyme catalyses Random endo-hydrolysis of N-acetyl-beta-D-glucosaminide (1-&gt;4)-beta-linkages in chitin and chitodextrins.. The protein is Chitinase 63 (chtA) of Streptomyces plicatus.